The sequence spans 874 residues: DNA primase (874 aa).

The CHC2-type zinc-finger motif lies at 786-824 (CLRHTHRASSKNVRVFLVLYYTSQAITVTFMSQCFAGRC). Residues 848 to 857 (ASQDSTTSQL) show a composition bias toward polar residues. The segment at 848-874 (ASQDSTTSQLARRRDRQDGSFSETLPN) is disordered.

This sequence belongs to the herpesviridae DNA primase family. As to quaternary structure, associates with the helicase and the primase-associated factor to form the helicase-primase factor.

The protein localises to the host nucleus. In terms of biological role, essential component of the helicase/primase complex. Unwinds the DNA at the replication forks and generates single-stranded DNA for both leading and lagging strand synthesis. The primase initiates primer synthesis and thereby produces large amount of short RNA primers on the lagging strand that the polymerase elongates using dNTPs. The polypeptide is DNA primase (Epstein-Barr virus (strain B95-8) (HHV-4)).